Here is a 118-residue protein sequence, read N- to C-terminus: Large ribosomal subunit protein uL24 (118 aa).

Belongs to the universal ribosomal protein uL24 family. Part of the 50S ribosomal subunit.

Its function is as follows. One of two assembly initiator proteins, it binds directly to the 5'-end of the 23S rRNA, where it nucleates assembly of the 50S subunit. In terms of biological role, one of the proteins that surrounds the polypeptide exit tunnel on the outside of the subunit. In Prochlorococcus marinus (strain AS9601), this protein is Large ribosomal subunit protein uL24.